The sequence spans 215 residues: Hibernation-associated plasma protein HP-25 (215 aa).

The N-terminal stretch at 1–28 (MPAQRGGALSMGAAGFWILVLSITSALA) is a signal peptide. The interval 29 to 96 (DSNNQGNSEP…RPKSAFAVKL (68 aa)) is disordered. 2 stretches are compositionally biased toward pro residues: residues 39–51 (CGPP…PGIP) and 60–77 (LGPP…PQGP). Positions 40-81 (GPPGPPGPPGIPGFPGAPGALGPPGPPGVPGIPGPQGPPGDV) constitute a Collagen-like domain. The C1q domain occupies 85 to 215 (SSRPKSAFAV…VFFGYLLYGK (131 aa)). An N-linked (GlcNAc...) asparagine glycan is attached at Asn-167.

As to expression, plasma; synthesized in the liver.

It is found in the secreted. Functionally, plasma proteins HP-20, HP-25, HP-27 and HP-55 form a 140 kDa complex via disulfide bonds in the plasma and are hibernation specific. In Tamias sibiricus (Siberian chipmunk), this protein is Hibernation-associated plasma protein HP-25.